The sequence spans 527 residues: SusD-like protein P25 (527 aa).

A signal peptide spans 1-15 (MKIQNIIVYVFLIFS). A lipid anchor (N-palmitoyl cysteine) is attached at Cys16. The S-diacylglycerol cysteine moiety is linked to residue Cys16.

It belongs to the SusD family.

Its subcellular location is the cell outer membrane. In terms of biological role, polysaccharide-binding protein probably involved in ulvan degradation. Ulvan is the main polysaccharide component of the Ulvales (green seaweed) cell wall. It is composed of disaccharide building blocks comprising 3-sulfated rhamnose (Rha3S) linked to D-glucuronic acid (GlcA), L-iduronic acid (IduA), or D-xylose (Xyl). The SusD-like protein may mediate ulvan oligomer-binding before transport in the periplasm for further degradation. The sequence is that of SusD-like protein P25 from Formosa agariphila (strain DSM 15362 / KCTC 12365 / LMG 23005 / KMM 3901 / M-2Alg 35-1).